The following is a 738-amino-acid chain: Ribosomal RNA large subunit methyltransferase K/L (738 aa).

Residues 46–157 enclose the THUMP domain; the sequence is TAYRVCLWSR…ADQAVIGLDL (112 aa).

The protein belongs to the methyltransferase superfamily. RlmKL family.

The protein resides in the cytoplasm. The enzyme catalyses guanosine(2445) in 23S rRNA + S-adenosyl-L-methionine = N(2)-methylguanosine(2445) in 23S rRNA + S-adenosyl-L-homocysteine + H(+). The catalysed reaction is guanosine(2069) in 23S rRNA + S-adenosyl-L-methionine = N(2)-methylguanosine(2069) in 23S rRNA + S-adenosyl-L-homocysteine + H(+). Functionally, specifically methylates the guanine in position 2445 (m2G2445) and the guanine in position 2069 (m7G2069) of 23S rRNA. This is Ribosomal RNA large subunit methyltransferase K/L from Methylococcus capsulatus (strain ATCC 33009 / NCIMB 11132 / Bath).